A 187-amino-acid polypeptide reads, in one-letter code: METLTSSSQSLISSPMSKKDYSSEIICAFDIGAKNPARTVLEVKDNSVRVLDISKLDWSSDWERRIAKDLSQYEYTTVLLERQPRRSPYVKFIYFIKGFLYHTSAAKVICVSPVMSGNSYRDRKKRSVEAFLDWMDTFGLRDSVPDRRKLDDVADSFNLAMRYVLDKWNTNYTPYNRCKSRNYIKKM.

This sequence belongs to the RuvC family. Poxviruses-type subfamily. The cofactor is Mg(2+).

Functionally, plays a role in DNA replication by cleaving viral DNA concatamers to yield unit-length viral genomes. The concatamer junctions contain inverted repeat sequences that can be extruded as cruciforms, yielding Holliday junctions that A22 protein cleaves. The protein is Resolvase OPG149 (OPG149) of Vaccinia virus (strain Western Reserve) (VACV).